The sequence spans 178 residues: Ribosome maturation factor RimM (178 aa).

In terms of domain architecture, PRC barrel spans 93 to 170 (EGSYYYHELR…ALTADAPAGL (78 aa)).

The protein belongs to the RimM family. In terms of assembly, binds ribosomal protein uS19.

The protein localises to the cytoplasm. Its function is as follows. An accessory protein needed during the final step in the assembly of 30S ribosomal subunit, possibly for assembly of the head region. Essential for efficient processing of 16S rRNA. May be needed both before and after RbfA during the maturation of 16S rRNA. It has affinity for free ribosomal 30S subunits but not for 70S ribosomes. In Deinococcus geothermalis (strain DSM 11300 / CIP 105573 / AG-3a), this protein is Ribosome maturation factor RimM.